The sequence spans 1419 residues: MIQQFTLLFLYLSFATAKAITGIFNSIDSLTWSNAGNYAFKGPGYPTWNAVLGWSLDGTSANPGDTFILNMPCVFKFTASQKSVDLTADGVKYATCQFYSGEEFTTFSSLKCTVNNNLRSSIKALGTVTLPIAFNVGGTGSSVDLEDSKCFTAGTNTVTFNDGSKKLSIAVNFEKSTVDQSGYLTTSRFMPSLNKIATLYVAPQCENGYTSGTMGFSTSYGDVAIDCSNVHIGISKGVNDWNHPVTSESFSYTKSCSSFGISITYQNVPAGYRPFIDAYISPSDNNQYQLSYKNDYTCVDDYWQHAPFTLKWTGYKNSDAGSNGIVIVATTRTVTDSTTAVTTLPFNPSVDKTKTIEILQPIPTTTITTSYVGVTTSYSTKTAPIGETATVIVDVPYHTTTTVTSEWTGTITTTTTRTNPTDSIDTVVVQVPSPNPTTTTTQFWSESFTSTTTITNSLKGTDSVIVREPHNPTVTTTEFWSESFATTETITSKPEGTDSVIVREPHNPTVTTTEFWSESYATTETITNGPEGTDSVIVREPHNPTVTTTKFWSESYATTETITNKPEGTDSVIVKEPYNPTVTTTEFWSESYATTETITNGPEGTDSVIVREPHNPTVTTTEFWSESYATTETITTGPLGTDSIVIHDPLEESSSTTAIESSDSNISSSAQESSSSVEQSSSIVGLSSSSDIPLSSDMPSSSSTGLTSSESSTVSSYDSDSSSSIESSTLSSSDRCSSSISDTTSFWDSSSSDLESTSITWSSSIDAQSSHLVQSVSNSISTSQELSSSSSEESSTFATDALVSSDASSILSSDTSSYYPSSTISSSDDFPHTIAGESDSLSISFITSTVEISSDSVSLTSDPASSFDSSSSLNSDSSSSPSSDQSDILTSSSFSTLVVPSFSLSSSSSLSLTYPHYVNSTTYHASESESSSVASPSMASESANDDTYTLSESTDTTSSIGTDSSTVTFCRRDNGDGCIVTGMPSSSIDSEQTSDVTTTSSFVASSTPTSAEQSITDNPNIDSSQTSASSSTKSSVSVSDTVVNSILLSETSTLSSDDSTSSDTSISSTTNSDTGNINAGSSHTSTASIKESSIQKTGVTLSSSYLSTKLSSTSDITIELITTELITTELTTIEDNEPNTFTSTPSSHSEIFSSDNSVLSKQVDRESTIKTSPTTDVTTVSSLSVHSTEASTATLGENSFSNVASTPSNIATSLRSTSSSSNHATESSGTVKSEASAEAIPSPPTSTDNRLSYSTEEAKGITYANSGSTNNLITESQVAAPTDSTSVLIENPVVTSTFDDNSSAAVDQPSKTKSIEESIMNPDSTNETNNGFIATLSQAQVPSSSIHSELISTTTAKTTDASMNGDSAASNSQPTTLIQQVATSSYNQPLITTYAGSSSATKHPSWLLKFISVALFFFL.

Residues 1 to 17 (MIQQFTLLFLYLSFATA) form the signal peptide. 4 cysteine pairs are disulfide-bonded: cysteine 73–cysteine 150, cysteine 96–cysteine 112, cysteine 205–cysteine 298, and cysteine 227–cysteine 256. ALS repeat units follow at residues 365–396 (TTIT…VDVP), 401–432 (TTVT…VQVP), 438–469 (TTTT…VREP), 474–505 (VTTT…VREP), 510–541 (VTTT…VREP), 546–577 (VTTT…VKEP), 582–613 (VTTT…VREP), and 618–649 (VTTT…IHDP). Disordered regions lie at residues 652 to 752 (ESSS…SSSS) and 864 to 885 (ASSF…SSDQ). N-linked (GlcNAc...) asparagine glycosylation occurs at asparagine 665. Asparagine 919 carries N-linked (GlcNAc...) asparagine glycosylation. Disordered regions lie at residues 926 to 966 (SESE…DSST), 981 to 1035 (TGMP…TKSS), 1051 to 1093 (TSTL…KESS), 1134 to 1177 (EDNE…TTDV), and 1211 to 1252 (ATSL…NRLS). Low complexity-rich tracts occupy residues 928-942 (SESS…ASES), 951-966 (SEST…DSST), and 993-1011 (TSDV…PTSA). The span at 1012 to 1022 (EQSITDNPNID) shows a compositional bias: polar residues. Low complexity-rich tracts occupy residues 1023–1035 (SSQT…TKSS) and 1051–1078 (TSTL…GNIN). 2 stretches are compositionally biased toward polar residues: residues 1079–1093 (AGSS…KESS) and 1138–1160 (PNTF…SVLS). The span at 1212–1230 (TSLRSTSSSSNHATESSGT) shows a compositional bias: low complexity. Residues asparagine 1301 and asparagine 1326 are each glycosylated (N-linked (GlcNAc...) asparagine). Serine 1398 carries the GPI-anchor amidated serine lipid modification. Residues 1399 to 1419 (SATKHPSWLLKFISVALFFFL) constitute a propeptide, removed in mature form.

This sequence belongs to the ALS family. Forms homodimers through the tandem repeats. Aggregates in amyloid-like structures, with self-propagating secondary-structure changes, amyloid-characteristic dye binding, and induced birefringence. In terms of processing, N-glycosylated and O-glycosylated. Post-translationally, the GPI-anchor is attached to the protein in the endoplasmic reticulum and serves to target the protein to the cell surface. There, the glucosamine-inositol phospholipid moiety is cleaved off and the GPI-modified mannoprotein is covalently attached via its lipidless GPI glycan remnant to the 1,6-beta-glucan of the outer cell wall layer.

Its subcellular location is the cell membrane. The protein localises to the secreted. It is found in the cell wall. Its function is as follows. Cell surface adhesion protein which mediates both yeast-to-host tissue adherence and yeast aggregation. Plays an important role in the pathogenesis of C.albicans infections. Forms amyloid structures, essential for cell-cell association and cell-substrate adhesion to polystyrene. The chain is Agglutinin-like protein 5 (ALS5) from Candida albicans (Yeast).